The sequence spans 431 residues: Enolase (431 aa).

Q166 contacts (2R)-2-phosphoglycerate. E208 functions as the Proton donor in the catalytic mechanism. Mg(2+)-binding residues include D245, E288, and D315. (2R)-2-phosphoglycerate-binding residues include K340, R369, S370, and K391. The active-site Proton acceptor is K340.

It belongs to the enolase family. The cofactor is Mg(2+).

Its subcellular location is the cytoplasm. It localises to the secreted. The protein resides in the cell surface. The catalysed reaction is (2R)-2-phosphoglycerate = phosphoenolpyruvate + H2O. Its pathway is carbohydrate degradation; glycolysis; pyruvate from D-glyceraldehyde 3-phosphate: step 4/5. Its function is as follows. Catalyzes the reversible conversion of 2-phosphoglycerate (2-PG) into phosphoenolpyruvate (PEP). It is essential for the degradation of carbohydrates via glycolysis. This is Enolase from Clostridium botulinum (strain 657 / Type Ba4).